Here is a 358-residue protein sequence, read N- to C-terminus: Methionine aminopeptidase 2 (358 aa).

H109 contacts substrate. The a divalent metal cation site is built by D130, D141, and H210. H218 is a binding site for substrate. Residues E243 and E339 each coordinate a divalent metal cation.

Belongs to the peptidase M24A family. Methionine aminopeptidase eukaryotic type 2 subfamily. Co(2+) serves as cofactor. Zn(2+) is required as a cofactor. It depends on Mn(2+) as a cofactor. Requires Fe(2+) as cofactor.

The protein resides in the cytoplasm. It catalyses the reaction Release of N-terminal amino acids, preferentially methionine, from peptides and arylamides.. Cotranslationally removes the N-terminal methionine from nascent proteins. The N-terminal methionine is often cleaved when the second residue in the primary sequence is small and uncharged (Met-Ala-, Cys, Gly, Pro, Ser, Thr, or Val). This is Methionine aminopeptidase 2 from Encephalitozoon cuniculi (strain GB-M1) (Microsporidian parasite).